Reading from the N-terminus, the 194-residue chain is GTP cyclohydrolase-2 (194 aa).

R47–E51 lines the GTP pocket. Zn(2+)-binding residues include C52, C63, and C65. GTP contacts are provided by residues Q68, E90 to R92, and T112. D124 functions as the Proton acceptor in the catalytic mechanism. The active-site Nucleophile is R126. The GTP site is built by T147 and K152.

It belongs to the GTP cyclohydrolase II family. As to quaternary structure, homodimer. Zn(2+) is required as a cofactor.

The enzyme catalyses GTP + 4 H2O = 2,5-diamino-6-hydroxy-4-(5-phosphoribosylamino)-pyrimidine + formate + 2 phosphate + 3 H(+). It participates in cofactor biosynthesis; riboflavin biosynthesis; 5-amino-6-(D-ribitylamino)uracil from GTP: step 1/4. Catalyzes the conversion of GTP to 2,5-diamino-6-ribosylamino-4(3H)-pyrimidinone 5'-phosphate (DARP), formate and pyrophosphate. This Buchnera aphidicola subsp. Acyrthosiphon pisum (strain APS) (Acyrthosiphon pisum symbiotic bacterium) protein is GTP cyclohydrolase-2.